Here is a 669-residue protein sequence, read N- to C-terminus: DNA mismatch repair protein MutL (669 aa).

The segment at Phe356–Ser377 is disordered. The segment covering Asn361–Ser377 has biased composition (polar residues).

The protein belongs to the DNA mismatch repair MutL/HexB family.

This protein is involved in the repair of mismatches in DNA. It is required for dam-dependent methyl-directed DNA mismatch repair. May act as a 'molecular matchmaker', a protein that promotes the formation of a stable complex between two or more DNA-binding proteins in an ATP-dependent manner without itself being part of a final effector complex. The sequence is that of DNA mismatch repair protein MutL from Staphylococcus aureus (strain MSSA476).